A 162-amino-acid polypeptide reads, in one-letter code: Cyclic pyranopterin monophosphate synthase (162 aa).

Substrate contacts are provided by residues 75–77 and 115–116; these read MCH and ME. D130 is a catalytic residue.

It belongs to the MoaC family. As to quaternary structure, homohexamer; trimer of dimers.

It catalyses the reaction (8S)-3',8-cyclo-7,8-dihydroguanosine 5'-triphosphate = cyclic pyranopterin phosphate + diphosphate. It participates in cofactor biosynthesis; molybdopterin biosynthesis. Functionally, catalyzes the conversion of (8S)-3',8-cyclo-7,8-dihydroguanosine 5'-triphosphate to cyclic pyranopterin monophosphate (cPMP). This is Cyclic pyranopterin monophosphate synthase from Geobacillus kaustophilus (strain HTA426).